We begin with the raw amino-acid sequence, 299 residues long: tRNA dimethylallyltransferase (299 aa).

11–18 (GPTAVGKT) lines the ATP pocket. Residue 13-18 (TAVGKT) participates in substrate binding. The interval 36–39 (DSQQ) is interaction with substrate tRNA.

The protein belongs to the IPP transferase family. As to quaternary structure, monomer. The cofactor is Mg(2+).

It catalyses the reaction adenosine(37) in tRNA + dimethylallyl diphosphate = N(6)-dimethylallyladenosine(37) in tRNA + diphosphate. Functionally, catalyzes the transfer of a dimethylallyl group onto the adenine at position 37 in tRNAs that read codons beginning with uridine, leading to the formation of N6-(dimethylallyl)adenosine (i(6)A). The polypeptide is tRNA dimethylallyltransferase (Streptococcus pyogenes serotype M1).